A 956-amino-acid polypeptide reads, in one-letter code: Ubiquitin carboxyl-terminal hydrolase CYLD (956 aa).

Positions 106–593 are interaction with TRIP; sequence CEERFSLFKN…LEIMIGKKKG (488 aa). CAP-Gly domains are found at residues 153-198 and 253-286; these read LAER…VFVA and DVLP…VQLC. The segment at 309–353 is disordered; sequence SVTQERRPPKLAFMSRGVGDKGSSSHNKPKATGSTSDPGNRNRSE. Residues 330 to 349 show a composition bias toward polar residues; sequence GSSSHNKPKATGSTSDPGNR. S387 bears the Phosphoserine mark. The segment at 392 to 411 is disordered; the sequence is STDFDRSSPPLQPPPVNSLT. Positions 394–469 are interaction with TRAF2; that stretch reads DFDRSSPPLQ…LAMPPGNSHG (76 aa). Phosphoserine is present on residues S418 and S422. Residues 470 to 554 are interaction with IKBKG/NEMO; it reads LEVGSLAEVK…FASLQPVSNQ (85 aa). The CAP-Gly 3 domain maps to 492 to 535; the sequence is GQPPGLNEVLAGLELEDECAGCTDGTFRGTRYFTCALKKALFVK. The 359-residue stretch at 592 to 950 folds into the USP domain; sequence KGIQGHYNSC…DAYMCMYQSP (359 aa). C601 functions as the Nucleophile in the catalytic mechanism. The segment at 781–833 is B-box; it reads LEDTPRQCRICGGLAMYECRECYDDPDISAGKIKQFCKTCNTQVHLHPKRLNH. Residues C788, C791, C799, C802, C817, C820, H825, and H833 each coordinate Zn(2+). The active-site Proton acceptor is the H871.

The protein belongs to the peptidase C19 family. As to quaternary structure, interacts (via CAP-Gly domain) with IKBKG/NEMO (via proline-rich C-terminal region). Interacts with TRAF2 and TRIP. Interacts with PLK1, DVL1, DVL3, MAVS, TBK1, IKKE and RIGI. Interacts (via CAP-Gly domain) with microtubules. Interacts with HDAC6 and BCL3. Interacts with MAP3K7. Identified in a complex with TRAF6 and SQSTM1. Interacts with OPTN and SQSTM1. Interacts with CEP350. Interacts with RNF31; the interaction is indirect and is mediated via SPATA2. Interacts with SPATA2 (via the PUB domain); the interaction is direct and recruits CYLD to the LUBAC complex, thereby regulating TNF-alpha-induced necroptosis. Ubiquitinated. Polyubiquitinated in hepatocytes treated with palmitic acid. Ubiquitination is mediated by E3 ligase TRIM47 and leads to proteasomal degradation. Post-translationally, phosphorylated on several serine residues by IKKA and/or IKKB in response to immune stimuli. Phosphorylation requires IKBKG. Phosphorylation abolishes TRAF2 deubiquitination, interferes with the activation of Jun kinases, and strongly reduces CD40-dependent gene activation by NF-kappa-B. In terms of tissue distribution, detected in fetal brain, testis, and skeletal muscle, and at a lower level in adult brain, leukocytes, liver, heart, kidney, spleen, ovary and lung. Isoform 2 is found in all tissues except kidney.

The protein resides in the cytoplasm. It is found in the perinuclear region. It localises to the cytoskeleton. Its subcellular location is the cell membrane. The protein localises to the microtubule organizing center. The protein resides in the centrosome. It is found in the spindle. It localises to the cilium basal body. It carries out the reaction Thiol-dependent hydrolysis of ester, thioester, amide, peptide and isopeptide bonds formed by the C-terminal Gly of ubiquitin (a 76-residue protein attached to proteins as an intracellular targeting signal).. With respect to regulation, inhibited by phosphorylation at serine residues. In terms of biological role, deubiquitinase that specifically cleaves 'Lys-63'- and linear 'Met-1'-linked polyubiquitin chains and is involved in NF-kappa-B activation and TNF-alpha-induced necroptosis. Negatively regulates NF-kappa-B activation by deubiquitinating upstream signaling factors. Contributes to the regulation of cell survival, proliferation and differentiation via its effects on NF-kappa-B activation. Negative regulator of Wnt signaling. Inhibits HDAC6 and thereby promotes acetylation of alpha-tubulin and stabilization of microtubules. Plays a role in the regulation of microtubule dynamics, and thereby contributes to the regulation of cell proliferation, cell polarization, cell migration, and angiogenesis. Required for normal cell cycle progress and normal cytokinesis. Inhibits nuclear translocation of NF-kappa-B. Plays a role in the regulation of inflammation and the innate immune response, via its effects on NF-kappa-B activation. Dispensable for the maturation of intrathymic natural killer cells, but required for the continued survival of immature natural killer cells. Negatively regulates TNFRSF11A signaling and osteoclastogenesis. Involved in the regulation of ciliogenesis, allowing ciliary basal bodies to migrate and dock to the plasma membrane; this process does not depend on NF-kappa-B activation. Ability to remove linear ('Met-1'-linked) polyubiquitin chains regulates innate immunity and TNF-alpha-induced necroptosis: recruited to the LUBAC complex via interaction with SPATA2 and restricts linear polyubiquitin formation on target proteins. Regulates innate immunity by restricting linear polyubiquitin formation on RIPK2 in response to NOD2 stimulation. Involved in TNF-alpha-induced necroptosis by removing linear ('Met-1'-linked) polyubiquitin chains from RIPK1, thereby regulating the kinase activity of RIPK1. Negatively regulates intestinal inflammation by removing 'Lys-63' linked polyubiquitin chain of NLRP6, thereby reducing the interaction between NLRP6 and PYCARD/ASC and formation of the NLRP6 inflammasome. Does not catalyze deubiquitination of heterotypic 'Lys-63'-/'Lys-48'-linked branched ubiquitin chains. Removes 'Lys-63' linked polyubiquitin chain of MAP3K7, which inhibits phosphorylation and blocks downstream activation of the JNK-p38 kinase cascades. Also removes 'Lys-63'-linked polyubiquitin chains of MAP3K1 and MA3P3K3, which inhibit their interaction with MAP2K1 and MAP2K2. The polypeptide is Ubiquitin carboxyl-terminal hydrolase CYLD (Homo sapiens (Human)).